The primary structure comprises 56 residues: Ovomucoid (56 aa).

In terms of domain architecture, Kazal-like spans 6 to 56 (VDCSDHPKPACLQEQKPLCGSDNKTYDNKCSFCNAVVDSNGTLTLSHFGKC). 3 disulfides stabilise this stretch: Cys-8–Cys-38, Cys-16–Cys-35, and Cys-24–Cys-56. N-linked (GlcNAc...) asparagine glycosylation occurs at Asn-45.

The protein localises to the secreted. The sequence is that of Ovomucoid from Pipile pipile (Trinidad piping guan).